A 787-amino-acid chain; its full sequence is Penicillin-binding protein 1A (787 aa).

The Cytoplasmic portion of the chain corresponds to 1-6 (MYKSLF). A helical; Signal-anchor for type II membrane protein membrane pass occupies residues 7 to 27 (LCLKIFAVLILIGCSVTAYII). Over 28 to 787 (YHYSHDLPDY…GMLDQSQEIY (760 aa)) the chain is Periplasmic. A transglycosylase region spans residues 49–220 (TRIYSRDGKL…SELNPDKNYS (172 aa)). Glutamate 87 functions as the Proton donor; for transglycosylase activity in the catalytic mechanism. Residues 398–711 (DVIVVEPIKD…SNVVLPIFID (314 aa)) are transpeptidase. Serine 457 (acyl-ester intermediate; for transpeptidase activity) is an active-site residue.

The protein in the N-terminal section; belongs to the glycosyltransferase 51 family. This sequence in the C-terminal section; belongs to the transpeptidase family.

It localises to the cell inner membrane. The enzyme catalyses [GlcNAc-(1-&gt;4)-Mur2Ac(oyl-L-Ala-gamma-D-Glu-L-Lys-D-Ala-D-Ala)](n)-di-trans,octa-cis-undecaprenyl diphosphate + beta-D-GlcNAc-(1-&gt;4)-Mur2Ac(oyl-L-Ala-gamma-D-Glu-L-Lys-D-Ala-D-Ala)-di-trans,octa-cis-undecaprenyl diphosphate = [GlcNAc-(1-&gt;4)-Mur2Ac(oyl-L-Ala-gamma-D-Glu-L-Lys-D-Ala-D-Ala)](n+1)-di-trans,octa-cis-undecaprenyl diphosphate + di-trans,octa-cis-undecaprenyl diphosphate + H(+). It carries out the reaction Preferential cleavage: (Ac)2-L-Lys-D-Ala-|-D-Ala. Also transpeptidation of peptidyl-alanyl moieties that are N-acyl substituents of D-alanine.. The protein operates within cell wall biogenesis; peptidoglycan biosynthesis. Cell wall formation. Synthesis of cross-linked peptidoglycan from the lipid intermediates. The enzyme has a penicillin-insensitive transglycosylase N-terminal domain (formation of linear glycan strands) and a penicillin-sensitive transpeptidase C-terminal domain (cross-linking of the peptide subunits). The protein is Penicillin-binding protein 1A (mrcA) of Rickettsia prowazekii (strain Madrid E).